The following is a 270-amino-acid chain: Glutamate racemase (270 aa).

Residues 15 to 16 (DS) and 47 to 48 (YG) contribute to the substrate site. The Proton donor/acceptor role is filled by C78. 79 to 80 (NT) serves as a coordination point for substrate. The Proton donor/acceptor role is filled by C189. 190-191 (TH) provides a ligand contact to substrate.

Belongs to the aspartate/glutamate racemases family.

It catalyses the reaction L-glutamate = D-glutamate. It participates in cell wall biogenesis; peptidoglycan biosynthesis. Provides the (R)-glutamate required for cell wall biosynthesis. This chain is Glutamate racemase, found in Syntrophus aciditrophicus (strain SB).